The sequence spans 62 residues: Photosystem II reaction center protein Z (62 aa).

2 consecutive transmembrane segments (helical) span residues 8–28 (ALIALVLFSFVMVIGVPVAYA) and 41–61 (YLGSAIWAILVVIVAILNFFV).

It belongs to the PsbZ family. As to quaternary structure, PSII is composed of 1 copy each of membrane proteins PsbA, PsbB, PsbC, PsbD, PsbE, PsbF, PsbH, PsbI, PsbJ, PsbK, PsbL, PsbM, PsbT, PsbX, PsbY, PsbZ, Psb30/Ycf12, peripheral proteins PsbO, CyanoQ (PsbQ), PsbU, PsbV and a large number of cofactors. It forms dimeric complexes.

The protein resides in the cellular thylakoid membrane. May control the interaction of photosystem II (PSII) cores with the light-harvesting antenna, regulates electron flow through the 2 photosystem reaction centers. PSII is a light-driven water plastoquinone oxidoreductase, using light energy to abstract electrons from H(2)O, generating a proton gradient subsequently used for ATP formation. The protein is Photosystem II reaction center protein Z of Rippkaea orientalis (strain PCC 8801 / RF-1) (Cyanothece sp. (strain PCC 8801)).